The primary structure comprises 1270 residues: Microtubule-associated tumor suppressor 1 (1270 aa).

The segment covering 1 to 14 (MTDDNSDDKIEDEL) has biased composition (acidic residues). Disordered regions lie at residues 1–50 (MTDD…NSAN) and 184–236 (FHTA…VTPS). Residues 38–50 (NSSASSVNWNSAN) show a composition bias toward low complexity. The residue at position 186 (threonine 186) is a Phosphothreonine. Low complexity predominate over residues 197-211 (SGSTSSLSYSTWTSS). The segment covering 212–228 (HSDKTHARETTYDRESF) has biased composition (basic and acidic residues). Phosphoserine is present on residues serine 381, serine 399, and serine 443. Disordered stretches follow at residues 524-560 (DAAL…PRSD) and 592-622 (THSK…SSSN). Residues 533–556 (RPQQTSASSPSSVNSRQQTVLSRT) are compositionally biased toward polar residues. Residue serine 629 is modified to Phosphoserine. Composition is skewed to polar residues over residues 701 to 710 (SKTTTTSGRN), 759 to 776 (VSSS…SSWV), and 797 to 815 (TGST…TYSN). The segment at 701-815 (SKTTTTSGRN…THSELSTYSN (115 aa)) is disordered. Residues 940–1231 (IQHLLSEREE…RLSMENEELL (292 aa)) adopt a coiled-coil conformation. A phosphoserine mark is found at serine 1203, serine 1224, serine 1245, serine 1255, serine 1259, serine 1261, serine 1264, and serine 1268. The tract at residues 1237-1270 (GDLCSPKRSPTSSAIPLQSPRNSGSFPSPSISPR) is disordered. Residues 1244–1270 (RSPTSSAIPLQSPRNSGSFPSPSISPR) show a composition bias toward polar residues.

This sequence belongs to the MTUS1 family. Homodimer. Interacts with AGTR2. Interacts with PTPN6. Isoform 1 associates with microtubules. As to expression, ubiquitously expressed (at protein level). Highly expressed in brain. Down-regulated in ovarian carcinoma, pancreas carcinoma, colon carcinoma and head and neck squamous cell carcinoma (HNSCC). Isoform 1 is the major isoform in most peripheral tissues. Isoform 2 is abundant in most peripheral tissues. Isoform 3 is the major isoform in brain, female reproductive tissues, thyroid and heart. Within brain it is highly expressed in corpus callosum and pons. Isoform 6 is brain-specific, it is the major isoform in cerebellum and fetal brain.

The protein localises to the mitochondrion. Its subcellular location is the golgi apparatus. It is found in the cell membrane. It localises to the nucleus. The protein resides in the cytoplasm. The protein localises to the cytoskeleton. Its subcellular location is the microtubule organizing center. It is found in the centrosome. It localises to the spindle. Functionally, cooperates with AGTR2 to inhibit ERK2 activation and cell proliferation. May be required for AGTR2 cell surface expression. Together with PTPN6, induces UBE2V2 expression upon angiotensin-II stimulation. Isoform 1 inhibits breast cancer cell proliferation, delays the progression of mitosis by prolonging metaphase and reduces tumor growth. This is Microtubule-associated tumor suppressor 1 (MTUS1) from Homo sapiens (Human).